The sequence spans 528 residues: Probable GTP-binding protein OBGM, mitochondrial (528 aa).

A mitochondrion-targeting transit peptide spans 1–45 (MWRRQHALLRRISLPKPPAATGIGCYYATEPEGRKPKTAPLQSRG). The Obg domain occupies 46–339 (MVDRFRLRAK…TYLILELKSI (294 aa)). Disordered stretches follow at residues 52–87 (LRAK…RGGD) and 167–212 (HSPF…NHRG). Residues 77 to 86 (PDGGNGGRGG) are compositionally biased toward gly residues. A compositionally biased stretch (basic and acidic residues) spans 197–207 (NTAENDCERGN). The region spanning 340–513 (ADVGLVGMPN…LRVGLRDLMD (174 aa)) is the OBG-type G domain. Residues 346-353 (GMPNAGKS) and 393-397 (DIPGL) contribute to the GTP site.

It belongs to the TRAFAC class OBG-HflX-like GTPase superfamily. OBG GTPase family.

It is found in the mitochondrion. Functionally, may bind GTP and have GTPase activity. The chain is Probable GTP-binding protein OBGM, mitochondrial (OBGM) from Oryza sativa subsp. japonica (Rice).